A 510-amino-acid chain; its full sequence is Probable cytosol aminopeptidase (510 aa).

Mn(2+) is bound by residues K254 and D259. K266 is an active-site residue. D277, D336, and E338 together coordinate Mn(2+). Residue R340 is part of the active site. The interval 487-510 (AQPVKASPKTRPARKSTPAAKTRA) is disordered.

It belongs to the peptidase M17 family. Requires Mn(2+) as cofactor.

The protein resides in the cytoplasm. The enzyme catalyses Release of an N-terminal amino acid, Xaa-|-Yaa-, in which Xaa is preferably Leu, but may be other amino acids including Pro although not Arg or Lys, and Yaa may be Pro. Amino acid amides and methyl esters are also readily hydrolyzed, but rates on arylamides are exceedingly low.. The catalysed reaction is Release of an N-terminal amino acid, preferentially leucine, but not glutamic or aspartic acids.. Functionally, presumably involved in the processing and regular turnover of intracellular proteins. Catalyzes the removal of unsubstituted N-terminal amino acids from various peptides. This Polaromonas naphthalenivorans (strain CJ2) protein is Probable cytosol aminopeptidase.